The sequence spans 254 residues: Glucosamine-6-phosphate deaminase (254 aa).

The active-site Proton acceptor; for enolization step is Asp-67. Residue Asn-136 is the For ring-opening step of the active site. Residue His-138 is the Proton acceptor; for ring-opening step of the active site. The active-site For ring-opening step is the Glu-143.

Belongs to the glucosamine/galactosamine-6-phosphate isomerase family. NagB subfamily.

The catalysed reaction is alpha-D-glucosamine 6-phosphate + H2O = beta-D-fructose 6-phosphate + NH4(+). It functions in the pathway amino-sugar metabolism; N-acetylneuraminate degradation; D-fructose 6-phosphate from N-acetylneuraminate: step 5/5. In terms of biological role, catalyzes the reversible isomerization-deamination of glucosamine 6-phosphate (GlcN6P) to form fructose 6-phosphate (Fru6P) and ammonium ion. The polypeptide is Glucosamine-6-phosphate deaminase (Brevibacillus brevis (strain 47 / JCM 6285 / NBRC 100599)).